A 143-amino-acid polypeptide reads, in one-letter code: Sirohydrochlorin cobaltochelatase (143 aa).

The Proton acceptor role is filled by H9. H9 is a Co(2+) binding site. Ni(2+) is bound at residue H9. Residues E45 and 70-75 (LAHGIH) contribute to the substrate site. H75 contributes to the Co(2+) binding site. H75 provides a ligand contact to Ni(2+).

It belongs to the CbiX family. CbiXS subfamily. As to quaternary structure, homotetramer; dimer of dimers.

The enzyme catalyses Co-sirohydrochlorin + 2 H(+) = sirohydrochlorin + Co(2+). It carries out the reaction Ni-sirohydrochlorin + 2 H(+) = sirohydrochlorin + Ni(2+). It functions in the pathway cofactor biosynthesis; adenosylcobalamin biosynthesis; cob(II)yrinate a,c-diamide from sirohydrochlorin (anaerobic route): step 1/10. Its function is as follows. Catalyzes the insertion of Co(2+) into sirohydrochlorin as part of the anaerobic pathway to cobalamin biosynthesis. Involved in the biosynthesis of the unique nickel-containing tetrapyrrole coenzyme F430, the prosthetic group of methyl-coenzyme M reductase (MCR), which plays a key role in methanogenesis and anaerobic methane oxidation. Catalyzes the insertion of Ni(2+) into sirohydrochlorin to yield Ni-sirohydrochlorin. The protein is Sirohydrochlorin cobaltochelatase of Methanocaldococcus jannaschii (strain ATCC 43067 / DSM 2661 / JAL-1 / JCM 10045 / NBRC 100440) (Methanococcus jannaschii).